We begin with the raw amino-acid sequence, 347 residues long: uncharacterized protein (347 aa).

5 disordered regions span residues 1 to 40 (MAQE…SNSM), 72 to 92 (SCED…IQGS), 133 to 158 (SDST…QLTL), 173 to 209 (ENQK…QVSH), and 306 to 347 (EDPR…PPDF). Residues 15 to 25 (PGQNITETTTD) show a composition bias toward polar residues. Basic and acidic residues predominate over residues 143-154 (GDNKDKHPKEKT). Positions 179 to 194 (KDDDSVFPESAQEEDS) are enriched in acidic residues. Residues 195–209 (QLPSSSLPGMAQVSH) are compositionally biased toward polar residues. Basic and acidic residues predominate over residues 306 to 318 (EDPREANERPREL). Over residues 319 to 330 (ARKKRFSYRSKR) the composition is skewed to basic residues.

This is an uncharacterized protein from Bos taurus (Bovine).